We begin with the raw amino-acid sequence, 746 residues long: Rhizobactin receptor (746 aa).

The N-terminal stretch at 1–26 (MGNNENGGISFCVFVVVIGFGTGAVA) is a signal peptide. The TonB box motif lies at 40-47 (EEIVVTGG). Positions 52–163 (QISEIARTIY…TGGIINIITK (112 aa)) constitute a TBDR plug domain. The region spanning 169 to 746 (EPGLHAEVTG…TFAVSLTKVF (578 aa)) is the TBDR beta-barrel domain. Positions 729–746 (FDYKGRGRTFAVSLTKVF) match the TonB C-terminal box motif.

The protein belongs to the TonB-dependent receptor family.

The protein localises to the cell outer membrane. In terms of biological role, receptor for the siderophore rhizobactin. This is Rhizobactin receptor (rhtA) from Rhizobium meliloti (strain 1021) (Ensifer meliloti).